The following is a 426-amino-acid chain: Chordin-like protein 2 (426 aa).

Residues Met-1–Ala-25 form the signal peptide. VWFC domains are found at residues Lys-31–Val-96 and Lys-109–Lys-175. A glycan (N-linked (GlcNAc...) asparagine) is linked at Asn-114. Residue Ser-182 is modified to Phosphoserine. The span at Ser-182–Gln-191 shows a compositional bias: polar residues. Residues Ser-182–Ser-216 form a disordered region. The N-linked (GlcNAc...) asparagine glycan is linked to Asn-186. Over residues His-192–Gly-206 the composition is skewed to basic and acidic residues. Residues Pro-207–Ser-216 are compositionally biased toward low complexity. Residues Lys-246–Pro-311 enclose the VWFC 3 domain.

As to quaternary structure, interacts with GDF5. May interact with INHBA, BMP2, BMP4, BMP5, BMP6, and BMP7. Weakly expressed in the liver and kidney. In reproductive organs expressed in connective tissues such as ligaments of the ovary and oviduct in females, and of testis, epididymis and certain male accessory sex glands in males. Expression was high in uterine myometrium. Weakly expressed in cartilage of the femoral head, patella, articular facets of vertebrae, in the annulus fibrosus of intervertebral disks. In normal cartilage, expression was confined to articular chondrocytes especially in the superficial zone.

The protein resides in the secreted. Implicated in tumor angiogenesis. May inhibits BMPs activity by blocking their interaction with their receptors. Has a negative regulator effect on the cartilage formation/regeneration from immature mesenchymal cells, by preventing or reducing the rate of matrix accumulation. May play a role during myoblast and osteoblast differentiation, and maturation. The chain is Chordin-like protein 2 (Chrdl2) from Mus musculus (Mouse).